A 320-amino-acid chain; its full sequence is MIIMRNYKFKLEPLKQCQEAFKRYTVHSTALYIIALQANWSRRLIYKLSLYFCKIKNCYTTFKFEQSNRFIITKAERIIKIQHLIRFKDIVNNFISLINILLVLIFCINLSGCNASKKLSYSNKYSYKELSKDDPHNLTYIGHYKVGKNYKIKGKIYKPHTPKYFTETGYASWYGGRKDGFHGKTTANGDRFNRNLLTAAHKTLPLPCLVKVTNKVNNKSVILMVNDRGPFKKNRIIDVSQKAAEILAFKNQGVTKVRIEYLPNETEKFLKKINLKKPENKTFAKNHKKSLFTQITKNNQCSINCHIKLVNLKYKLAVNP.

It belongs to the RlpA family.

Functionally, lytic transglycosylase with a strong preference for naked glycan strands that lack stem peptides. This chain is Endolytic peptidoglycan transglycosylase RlpA, found in Rickettsia prowazekii (strain Madrid E).